We begin with the raw amino-acid sequence, 56 residues long: Small ribosomal subunit protein bS21 (56 aa).

Belongs to the bacterial ribosomal protein bS21 family.

The sequence is that of Small ribosomal subunit protein bS21 from Synechococcus sp. (strain RCC307).